The following is an 86-amino-acid chain: Cell division topological specificity factor (86 aa).

This sequence belongs to the MinE family.

Functionally, prevents the cell division inhibition by proteins MinC and MinD at internal division sites while permitting inhibition at polar sites. This ensures cell division at the proper site by restricting the formation of a division septum at the midpoint of the long axis of the cell. The polypeptide is Cell division topological specificity factor (Albidiferax ferrireducens (strain ATCC BAA-621 / DSM 15236 / T118) (Rhodoferax ferrireducens)).